The chain runs to 84 residues: Putative membrane protein insertion efficiency factor (84 aa).

The interval 63-84 (WGGSGYDPVPGADPEHDRRPRG) is disordered. Basic and acidic residues predominate over residues 75–84 (DPEHDRRPRG).

Belongs to the UPF0161 family.

Its subcellular location is the cell inner membrane. Its function is as follows. Could be involved in insertion of integral membrane proteins into the membrane. This chain is Putative membrane protein insertion efficiency factor, found in Cereibacter sphaeroides (strain ATCC 17025 / ATH 2.4.3) (Rhodobacter sphaeroides).